Here is a 98-residue protein sequence, read N- to C-terminus: Ribonuclease P protein component 4 (98 aa).

Zn(2+)-binding residues include Cys-62, Cys-65, Cys-85, and Cys-88.

This sequence belongs to the eukaryotic/archaeal RNase P protein component 4 family. Consists of a catalytic RNA component and at least 4-5 protein subunits. Requires Zn(2+) as cofactor.

The protein resides in the cytoplasm. It catalyses the reaction Endonucleolytic cleavage of RNA, removing 5'-extranucleotides from tRNA precursor.. Part of ribonuclease P, a protein complex that generates mature tRNA molecules by cleaving their 5'-ends. This Thermoplasma volcanium (strain ATCC 51530 / DSM 4299 / JCM 9571 / NBRC 15438 / GSS1) protein is Ribonuclease P protein component 4.